The primary structure comprises 386 residues: Patatin-04/09 (386 aa).

A signal peptide spans 1–23; sequence MATTKSFLILFFMILATTSSTCA. Positions 32 to 229 constitute a PNPLA domain; the sequence is LSIDGGGIKG…TVGDPALLSL (198 aa). Positions 36-41 match the GXGXXG motif; that stretch reads GGGIKG. Residues 75–79 carry the GXSXG motif; the sequence is GTSTG. Catalysis depends on Ser77, which acts as the Nucleophile. An N-linked (GlcNAc...) asparagine glycan is attached at Asn115. Asp215 functions as the Proton acceptor in the catalytic mechanism. A DGA/G motif is present at residues 215 to 217; it reads DGG. Residues 321–384 are a coiled coil; sequence ENALNGTTTE…DRKKLRANKA (64 aa). N-linked (GlcNAc...) asparagine glycosylation occurs at Asn325.

This sequence belongs to the patatin family. Tuber.

The protein resides in the vacuole. Probable lipolytic acyl hydrolase (LAH), an activity which is thought to be involved in the response of tubers to pathogens. In Solanum tuberosum (Potato), this protein is Patatin-04/09.